A 192-amino-acid polypeptide reads, in one-letter code: Imidazole glycerol phosphate synthase subunit HisH (192 aa).

Residues 1–192 enclose the Glutamine amidotransferase type-1 domain; the sequence is MIVIVDYGLG…QAIQGGFIND (192 aa). Cys-77 functions as the Nucleophile in the catalytic mechanism. Residues His-169 and Glu-171 contribute to the active site.

As to quaternary structure, heterodimer of HisH and HisF.

The protein resides in the cytoplasm. It carries out the reaction 5-[(5-phospho-1-deoxy-D-ribulos-1-ylimino)methylamino]-1-(5-phospho-beta-D-ribosyl)imidazole-4-carboxamide + L-glutamine = D-erythro-1-(imidazol-4-yl)glycerol 3-phosphate + 5-amino-1-(5-phospho-beta-D-ribosyl)imidazole-4-carboxamide + L-glutamate + H(+). The catalysed reaction is L-glutamine + H2O = L-glutamate + NH4(+). The protein operates within amino-acid biosynthesis; L-histidine biosynthesis; L-histidine from 5-phospho-alpha-D-ribose 1-diphosphate: step 5/9. IGPS catalyzes the conversion of PRFAR and glutamine to IGP, AICAR and glutamate. The HisH subunit catalyzes the hydrolysis of glutamine to glutamate and ammonia as part of the synthesis of IGP and AICAR. The resulting ammonia molecule is channeled to the active site of HisF. The polypeptide is Imidazole glycerol phosphate synthase subunit HisH (Staphylococcus aureus (strain COL)).